Reading from the N-terminus, the 364-residue chain is Protein MGF 360-18R (364 aa).

Belongs to the asfivirus MGF 360 family.

In terms of biological role, plays a role in virus cell tropism, and may be required for efficient virus replication in macrophages. The polypeptide is Protein MGF 360-18R (African swine fever virus (isolate Tick/South Africa/Pretoriuskop Pr4/1996) (ASFV)).